A 240-amino-acid polypeptide reads, in one-letter code: Uridylate kinase (240 aa).

Residue 13 to 16 participates in ATP binding; it reads KASG. The interval 21–26 is involved in allosteric activation by GTP; sequence GAQGFG. Glycine 55 lines the UMP pocket. Glycine 56 and arginine 60 together coordinate ATP. UMP-binding positions include aspartate 75 and 136–143; that span reads TGNPFFTT. ATP is bound by residues threonine 163, glutamine 164, tyrosine 169, and aspartate 172.

This sequence belongs to the UMP kinase family. As to quaternary structure, homohexamer.

It localises to the cytoplasm. It catalyses the reaction UMP + ATP = UDP + ADP. The protein operates within pyrimidine metabolism; CTP biosynthesis via de novo pathway; UDP from UMP (UMPK route): step 1/1. With respect to regulation, allosterically activated by GTP. Inhibited by UTP. Functionally, catalyzes the reversible phosphorylation of UMP to UDP. This chain is Uridylate kinase, found in Rhizobium etli (strain ATCC 51251 / DSM 11541 / JCM 21823 / NBRC 15573 / CFN 42).